The following is a 92-amino-acid chain: Small ribosomal subunit protein uS19 (92 aa).

This sequence belongs to the universal ribosomal protein uS19 family.

Protein S19 forms a complex with S13 that binds strongly to the 16S ribosomal RNA. In Bifidobacterium animalis subsp. lactis (strain AD011), this protein is Small ribosomal subunit protein uS19.